A 187-amino-acid polypeptide reads, in one-letter code: Elongation factor P (187 aa).

Belongs to the elongation factor P family.

The protein resides in the cytoplasm. The protein operates within protein biosynthesis; polypeptide chain elongation. Functionally, involved in peptide bond synthesis. Stimulates efficient translation and peptide-bond synthesis on native or reconstituted 70S ribosomes in vitro. Probably functions indirectly by altering the affinity of the ribosome for aminoacyl-tRNA, thus increasing their reactivity as acceptors for peptidyl transferase. The chain is Elongation factor P from Parafrankia sp. (strain EAN1pec).